Reading from the N-terminus, the 325-residue chain is Thiamine-monophosphate kinase (325 aa).

The Mg(2+) site is built by Asp30, Ser45, Thr46, and Asp47. His54 is a substrate binding site. The Mg(2+) site is built by Asp75 and Asp122. ATP is bound by residues 121–122 and Arg146; that span reads GD. A Mg(2+)-binding site is contributed by Asp212. Ser214 serves as a coordination point for ATP. Position 215 (Asp215) interacts with Mg(2+). 2 residues coordinate substrate: Glu263 and Tyr319.

It belongs to the thiamine-monophosphate kinase family.

It carries out the reaction thiamine phosphate + ATP = thiamine diphosphate + ADP. The protein operates within cofactor biosynthesis; thiamine diphosphate biosynthesis; thiamine diphosphate from thiamine phosphate: step 1/1. Functionally, catalyzes the ATP-dependent phosphorylation of thiamine-monophosphate (TMP) to form thiamine-pyrophosphate (TPP), the active form of vitamin B1. This chain is Thiamine-monophosphate kinase, found in Escherichia coli O157:H7.